Consider the following 134-residue polypeptide: Large ribosomal subunit protein uL14 (134 aa).

This sequence belongs to the universal ribosomal protein uL14 family. In terms of assembly, in the 70S ribosome, L14 and L19 interact and together make contacts with the 16S rRNA in bridges B5 and B8. Part of the 50S ribosomal subunit. Forms a cluster with proteins L3 and L19.

Forms part of two intersubunit bridges in the 70S ribosome. Binds to 23S rRNA. The sequence is that of Large ribosomal subunit protein uL14 from Deinococcus radiodurans (strain ATCC 13939 / DSM 20539 / JCM 16871 / CCUG 27074 / LMG 4051 / NBRC 15346 / NCIMB 9279 / VKM B-1422 / R1).